The primary structure comprises 239 residues: Large ribosomal subunit protein uL2 (239 aa).

Positions 205 to 224 (GGHQHCGRPKTVARGTSPGR) are disordered.

It belongs to the universal ribosomal protein uL2 family. In terms of assembly, part of the 50S ribosomal subunit. Forms a bridge to the 30S subunit in the 70S ribosome.

One of the primary rRNA binding proteins. Required for association of the 30S and 50S subunits to form the 70S ribosome, for tRNA binding and peptide bond formation. It has been suggested to have peptidyltransferase activity; this is somewhat controversial. Makes several contacts with the 16S rRNA in the 70S ribosome. The chain is Large ribosomal subunit protein uL2 from Methanoculleus marisnigri (strain ATCC 35101 / DSM 1498 / JR1).